Here is an 81-residue protein sequence, read N- to C-terminus: Acyl carrier protein (81 aa).

One can recognise a Carrier domain in the interval 1–79; that stretch reads MDVAAMQVKI…DIFDYLAKNK (79 aa). At S39 the chain carries O-(pantetheine 4'-phosphoryl)serine.

It belongs to the acyl carrier protein (ACP) family. 4'-phosphopantetheine is transferred from CoA to a specific serine of apo-ACP by AcpS. This modification is essential for activity because fatty acids are bound in thioester linkage to the sulfhydryl of the prosthetic group.

Its subcellular location is the cytoplasm. Its pathway is lipid metabolism; fatty acid biosynthesis. Functionally, carrier of the growing fatty acid chain in fatty acid biosynthesis. In Syntrophobacter fumaroxidans (strain DSM 10017 / MPOB), this protein is Acyl carrier protein.